We begin with the raw amino-acid sequence, 388 residues long: Succinate--CoA ligase [ADP-forming] subunit beta (388 aa).

One can recognise an ATP-grasp domain in the interval lysine 9 to lysine 245. ATP contacts are provided by residues lysine 46, glycine 53 to glycine 55, glutamate 100, tyrosine 103, and glutamate 108. Positions 200 and 214 each coordinate Mg(2+). Residues asparagine 265 and glycine 322–valine 324 contribute to the substrate site.

This sequence belongs to the succinate/malate CoA ligase beta subunit family. Heterotetramer of two alpha and two beta subunits. It depends on Mg(2+) as a cofactor.

The catalysed reaction is succinate + ATP + CoA = succinyl-CoA + ADP + phosphate. It catalyses the reaction GTP + succinate + CoA = succinyl-CoA + GDP + phosphate. It functions in the pathway carbohydrate metabolism; tricarboxylic acid cycle; succinate from succinyl-CoA (ligase route): step 1/1. In terms of biological role, succinyl-CoA synthetase functions in the citric acid cycle (TCA), coupling the hydrolysis of succinyl-CoA to the synthesis of either ATP or GTP and thus represents the only step of substrate-level phosphorylation in the TCA. The beta subunit provides nucleotide specificity of the enzyme and binds the substrate succinate, while the binding sites for coenzyme A and phosphate are found in the alpha subunit. This is Succinate--CoA ligase [ADP-forming] subunit beta from Acinetobacter baylyi (strain ATCC 33305 / BD413 / ADP1).